Reading from the N-terminus, the 636-residue chain is Threonine--tRNA ligase (636 aa).

Residues 1–63 (MNEINVTLPD…ADGARVEIIT (63 aa)) form the TGS domain. The interval 243-534 (DHRKLGRELD…LIEHFAGNFP (292 aa)) is catalytic. Positions 335, 386, and 511 each coordinate Zn(2+).

Belongs to the class-II aminoacyl-tRNA synthetase family. In terms of assembly, homodimer. Zn(2+) is required as a cofactor.

The protein resides in the cytoplasm. It catalyses the reaction tRNA(Thr) + L-threonine + ATP = L-threonyl-tRNA(Thr) + AMP + diphosphate + H(+). Its function is as follows. Catalyzes the attachment of threonine to tRNA(Thr) in a two-step reaction: L-threonine is first activated by ATP to form Thr-AMP and then transferred to the acceptor end of tRNA(Thr). Also edits incorrectly charged L-seryl-tRNA(Thr). The chain is Threonine--tRNA ligase from Citrifermentans bemidjiense (strain ATCC BAA-1014 / DSM 16622 / JCM 12645 / Bem) (Geobacter bemidjiensis).